Consider the following 147-residue polypeptide: uncharacterized protein (147 aa).

This is an uncharacterized protein from Escherichia coli.